We begin with the raw amino-acid sequence, 60 residues long: Large ribosomal subunit protein uL30 (60 aa).

Belongs to the universal ribosomal protein uL30 family. In terms of assembly, part of the 50S ribosomal subunit.

In Syntrophobacter fumaroxidans (strain DSM 10017 / MPOB), this protein is Large ribosomal subunit protein uL30.